The following is a 420-amino-acid chain: Xyloglucan O-acetyltransferase 4 (420 aa).

The Cytoplasmic segment spans residues 1–30 (MTMHEKMKLPSCSCSAFKCGKKDRWLNMER). Residues 31 to 51 (PIPFLLIGLTTILSVFILYTL) form a helical; Signal-anchor for type II membrane protein membrane-spanning segment. The Lumenal segment spans residues 52–420 (NPLKFVIEHN…LLLAVLRRLD (369 aa)). 4 disulfide bridges follow: C78-C128, C99-C164, C108-C400, and C323-C396. N96 is a glycosylation site (N-linked (GlcNAc...) asparagine). A GDS motif motif is present at residues 151–153 (GDS). Residue S153 is the Nucleophile of the active site. N-linked (GlcNAc...) asparagine glycosylation is found at N192, N212, N270, and N324. Residue D395 is the Proton donor of the active site. The DXXH motif motif lies at 395–398 (DCVH). Catalysis depends on H398, which acts as the Proton acceptor.

The protein belongs to the PC-esterase family. TBL subfamily.

Its subcellular location is the golgi apparatus membrane. In terms of biological role, xyloglucan acetyltransferase that catalyzes the acetylation of fucosylated Gal residues on xyloglucan side chains. Predominantly catalyze 6-O-monoacetylation of Gal residues in the Fuc-Gal-Xyl trisaccharide side chains of xyloglucan oligomers. This chain is Xyloglucan O-acetyltransferase 4, found in Populus trichocarpa (Western balsam poplar).